Here is a 352-residue protein sequence, read N- to C-terminus: Outer membrane protein assembly factor BamC (352 aa).

The first 24 residues, 1–24 (MAISLQKSTVVKVVGVSLVMLLAA), serve as a signal peptide directing secretion. Cys-25 is lipidated: N-palmitoyl cysteine. Cys-25 carries the S-diacylglycerol cysteine lipid modification.

This sequence belongs to the BamC family. In terms of assembly, part of the Bam complex, which is composed of the outer membrane protein BamA, and four lipoproteins BamB, BamC, BamD and BamE.

It is found in the cell outer membrane. Its function is as follows. Part of the outer membrane protein assembly complex, which is involved in assembly and insertion of beta-barrel proteins into the outer membrane. The polypeptide is Outer membrane protein assembly factor BamC (Yersinia pestis).